Consider the following 428-residue polypeptide: Enolase (428 aa).

Glutamine 163 provides a ligand contact to (2R)-2-phosphoglycerate. Residue glutamate 205 is the Proton donor of the active site. Mg(2+)-binding residues include aspartate 242, glutamate 285, and aspartate 312. Residues lysine 337, arginine 366, serine 367, and lysine 388 each coordinate (2R)-2-phosphoglycerate. The Proton acceptor role is filled by lysine 337.

Belongs to the enolase family. Requires Mg(2+) as cofactor.

The protein localises to the cytoplasm. It localises to the secreted. Its subcellular location is the cell surface. The enzyme catalyses (2R)-2-phosphoglycerate = phosphoenolpyruvate + H2O. It functions in the pathway carbohydrate degradation; glycolysis; pyruvate from D-glyceraldehyde 3-phosphate: step 4/5. Catalyzes the reversible conversion of 2-phosphoglycerate (2-PG) into phosphoenolpyruvate (PEP). It is essential for the degradation of carbohydrates via glycolysis. This Erythrobacter litoralis (strain HTCC2594) protein is Enolase.